A 475-amino-acid polypeptide reads, in one-letter code: MSDTEQERWSRVKGRLRSTVGEDIYSSWFARMDLESVHGESVRLSVPTRFLKSWIQAHYAERVLSCWQAELPDVHRIDLTVRSAMRCAAPVREAPATDARHPERSEGRNGVELKTVATAPASANHDALGGSPLDPRLTFQSFVTGRSNTLAHAAARQVAEGRRGDSVMFNPLYIHAGVGLGKTHLLQAVTWAGNAGTERRVLYLTAEKFMYGFVAALKTQTALAFKEALRGIDVLVIDDLQFLQGKSTQAEFCHTLNALIDAGRQVVIAADRPPSDLESLDDRVRSRLAGGLVVEMGSLGEELRLGILRSRVEAARVHHASFDVPEPVLDYLAKAITHNGRDLEGAINRLLAHSKLNAQPVTLEMAEREVRDLVRPQEPRRIKIEDIQRVVARQYNVSRSDLLSSRRTANVVRPRQVAMYLAKTLTLRSLPEIGRRFGGRDHTTVLHAVRKIEALVSKDTTLSDEVELLKRQLQE.

Positions 1–73 (MSDTEQERWS…LSCWQAELPD (73 aa)) are domain I, interacts with DnaA modulators. Positions 73-131 (DVHRIDLTVRSAMRCAAPVREAPATDARHPERSEGRNGVELKTVATAPASANHDALGGS) are domain II. The tract at residues 132–354 (PLDPRLTFQS…GAINRLLAHS (223 aa)) is domain III, AAA+ region. The ATP site is built by Gly-179, Gly-181, Lys-182, and Thr-183. Residues 355-475 (KLNAQPVTLE…VELLKRQLQE (121 aa)) are domain IV, binds dsDNA.

This sequence belongs to the DnaA family. In terms of assembly, oligomerizes as a right-handed, spiral filament on DNA at oriC.

It is found in the cytoplasm. Functionally, plays an essential role in the initiation and regulation of chromosomal replication. ATP-DnaA binds to the origin of replication (oriC) to initiate formation of the DNA replication initiation complex once per cell cycle. Binds the DnaA box (a 9 base pair repeat at the origin) and separates the double-stranded (ds)DNA. Forms a right-handed helical filament on oriC DNA; dsDNA binds to the exterior of the filament while single-stranded (ss)DNA is stabiized in the filament's interior. The ATP-DnaA-oriC complex binds and stabilizes one strand of the AT-rich DNA unwinding element (DUE), permitting loading of DNA polymerase. After initiation quickly degrades to an ADP-DnaA complex that is not apt for DNA replication. Binds acidic phospholipids. The polypeptide is Chromosomal replication initiator protein DnaA (Nitrobacter winogradskyi (strain ATCC 25391 / DSM 10237 / CIP 104748 / NCIMB 11846 / Nb-255)).